The sequence spans 359 residues: uncharacterized protein (359 aa).

Positions 1 to 15 are cleaved as a signal peptide; it reads MSIVLAIDTATAAVT. The 148-residue stretch at 212–359 folds into the N-acetyltransferase domain; it reads IVIGTLTPAD…DAYLMRREAQ (148 aa).

This is an uncharacterized protein from Mycobacterium leprae (strain TN).